Reading from the N-terminus, the 115-residue chain is Con-Ins T2 (115 aa).

Positions 1–21 (MTTSFYFLLVALGLLLYVCQS) are cleaved as a signal peptide. A propeptide spanning residues 22 to 29 (SFGNQHTR) is cleaved from the precursor. Disulfide bonds link Cys-38–Cys-101, Cys-50–Cys-114, and Cys-100–Cys-105. Residue Glu-48 is modified to 4-carboxyglutamate. Residues 53–94 (KRNDAGKKRGQASPLWQRGGSLSMLKARAKRNEAFHLQRAHR) constitute a propeptide, c peptide. Glu-98 is modified (4-carboxyglutamate). 4-carboxyglutamate is present on Glu-109. The residue at position 114 (Cys-114) is a Cysteine amide.

This sequence belongs to the insulin family. In terms of assembly, heterodimer of A and B chains; disulfide-linked. Expressed by the venom gland.

It localises to the secreted. Functionally, this venom insulin facilitates prey capture by rapidly inducing hypoglycemic shock. It is one of the smallest known insulin found in nature and lacks the C-terminal segment of the B chain that, in human insulin, mediates engagement of the insulin receptor (INSR) and assembly of the hormone's hexameric storage form. Despite lacking this segment, it both binds and activates human insulin receptor (long isoform (HIR-B)) with a high potency (EC(50)=15.5 nM). In vivo, intraperitoneal injection of this peptide into zebrafish lowers blood glucose with a lower potency than human insulin. In addition, when applied to water, this peptide reduces overall locomotor activity of zebrafish larvae, observed as a significant decrease in the percentage of time spent swimming and movement frequency. When tested on a mouse model of diabetes, this insulin also lowers blood glucose with a 10-fold lower potency than human insulin. The sequence is that of Con-Ins T2 from Conus tulipa (Fish-hunting cone snail).